A 95-amino-acid polypeptide reads, in one-letter code: Small ribosomal subunit protein bS6 (95 aa).

This sequence belongs to the bacterial ribosomal protein bS6 family.

Functionally, binds together with bS18 to 16S ribosomal RNA. The chain is Small ribosomal subunit protein bS6 from Bacillus cytotoxicus (strain DSM 22905 / CIP 110041 / 391-98 / NVH 391-98).